Consider the following 354-residue polypeptide: MALTTHSGKLIPELQFKAHHFIDKTTVLYGPSKTGKTVYVKHIMKILQPHIEQILVVAPSEPSNRSYEGFVHPTLIHYRLWLADKQKKNDNKGAERFLEAIWQRQTMMSSIYSRVNNIDMLKTLYHKLPIDIQQKENKNIAKVECLKAEQTDQKKEEKITSLYQQLLKKIIIQNIHMYKNLCLTENEKFTLNYINLNPRLLLILDDCAAELHPLFTKEIFKKFFYQNRHCFISMIICCQDDTDLPANLRKNAFVSIFTNASICMSNFSRQSNRYSKQDKEYVEEISHIVFKGYRKLVYIREDENRQHFYHSTVPLPTAFSFGSKALLKLCKAVYSKEVVIDKSNPYWSKFRLNF.

The protein belongs to the asfivirus B354L family.

This is an uncharacterized protein from Ornithodoros (relapsing fever ticks).